The primary structure comprises 156 residues: Lipoprotein signal peptidase (156 aa).

3 consecutive transmembrane segments (helical) span residues 5 to 25 (FFVV…TKQW), 63 to 83 (IEWQ…AIIA), and 90 to 110 (SNPY…GNLI). Catalysis depends on residues aspartate 120 and aspartate 138. Residues 133 to 153 (AFNVADMGICVGAFFVCLAVY) form a helical membrane-spanning segment.

It belongs to the peptidase A8 family.

The protein resides in the cell inner membrane. It carries out the reaction Release of signal peptides from bacterial membrane prolipoproteins. Hydrolyzes -Xaa-Yaa-Zaa-|-(S,diacylglyceryl)Cys-, in which Xaa is hydrophobic (preferably Leu), and Yaa (Ala or Ser) and Zaa (Gly or Ala) have small, neutral side chains.. It functions in the pathway protein modification; lipoprotein biosynthesis (signal peptide cleavage). Its function is as follows. This protein specifically catalyzes the removal of signal peptides from prolipoproteins. The polypeptide is Lipoprotein signal peptidase (Oleidesulfovibrio alaskensis (strain ATCC BAA-1058 / DSM 17464 / G20) (Desulfovibrio alaskensis)).